We begin with the raw amino-acid sequence, 26 residues long: Conotoxin Eb6.15 (26 aa).

Intrachain disulfides connect Cys7/Cys18 and Cys13/Cys25.

It belongs to the conotoxin O1 superfamily. As to expression, expressed by the venom duct.

It is found in the secreted. The polypeptide is Conotoxin Eb6.15 (E1) (Conus ebraeus (Hebrew cone)).